The sequence spans 33 residues: Photosystem II reaction center protein T (33 aa).

The chain crosses the membrane as a helical span at residues 3–23; the sequence is ALVYTFLLVSTLGILFFSIFF.

The protein belongs to the PsbT family. In terms of assembly, PSII is composed of 1 copy each of membrane proteins PsbA, PsbB, PsbC, PsbD, PsbE, PsbF, PsbH, PsbI, PsbJ, PsbK, PsbL, PsbM, PsbT, PsbY, PsbZ, Psb30/Ycf12, at least 3 peripheral proteins of the oxygen-evolving complex and a large number of cofactors. It forms dimeric complexes.

It localises to the plastid. The protein localises to the chloroplast thylakoid membrane. Found at the monomer-monomer interface of the photosystem II (PS II) dimer, plays a role in assembly and dimerization of PSII. PSII is a light-driven water plastoquinone oxidoreductase, using light energy to abstract electrons from H(2)O, generating a proton gradient subsequently used for ATP formation. The polypeptide is Photosystem II reaction center protein T (Pelargonium hortorum (Common geranium)).